The following is a 389-amino-acid chain: Probable protein phosphatase 2C 47 (389 aa).

In terms of domain architecture, PPM-type phosphatase spans 76 to 346 (RSGSFADIGP…DNLTVIVVCF (271 aa)). Asp120, Gly121, Asp294, and Asp337 together coordinate Mn(2+).

This sequence belongs to the PP2C family. Mg(2+) is required as a cofactor. The cofactor is Mn(2+).

It catalyses the reaction O-phospho-L-seryl-[protein] + H2O = L-seryl-[protein] + phosphate. It carries out the reaction O-phospho-L-threonyl-[protein] + H2O = L-threonyl-[protein] + phosphate. This Oryza sativa subsp. japonica (Rice) protein is Probable protein phosphatase 2C 47.